The following is a 744-amino-acid chain: Tripartite motif-containing protein 3 (744 aa).

Alanine 2 carries the N-acetylalanine modification. The segment at 2 to 290 is interaction with KIF21B; that stretch reads AKREDSPGPE…LAAQAFPERP (289 aa). Serine 7 is modified (phosphoserine). The segment at 22–63 adopts an RING-type zinc-finger fold; it reads CSICLDRYRCPKVLPCLHTFCERCLQNYIPPQSLTLSCPVCR. The segment at 110-151 adopts a B box-type zinc-finger fold; that stretch reads GRPLSCPNHEGKTMEFYCEACETAMCGECRAGEHREHGTVLL. Zn(2+)-binding residues include cysteine 115, histidine 118, cysteine 138, and histidine 143. Positions 153–224 form a coiled coil; sequence DVVEQHKAAL…RKQALVSDLE (72 aa). The Filamin repeat unit spans residues 317-418; the sequence is TTSAAAHETV…VRGSPFRVRA (102 aa). The interval 420–462 is disordered; the sequence is RPGDLPPSPDDVKRRVKSPGGPGSHVRQKAVRRPSSMYSTGGK. Serine 427 carries the post-translational modification Phosphoserine. NHL repeat units lie at residues 473–516, 520–563, 564–605, 609–652, 656–699, and 700–743; these read VFRV…FSNE, KFRF…FSPE, GKFK…FQPN, VGRF…YSAD, LFKF…FDSS, and GSFL…YRYL.

Belongs to the TRIM/RBCC family. Forms homooligomers. Interacts with TRIM2; this interaction reduces TRIM2 activity. Associates with myosin-Vb (MYO5B) and alpha-actinin-4 (ACTN4). Component of the CART complex, at least composed of ACTN4, HGS/HRS, MYO5B and TRIM3. Interacts with ZFYVE28/LST2. Interacts with KIF21B. Highly expressed in the brain, moderate levels in the lung, very low levels in the liver, kidney and heart. In the brain, expression was highest in the cerebellum. Expression in the brain is found at low levels at embryonic day 15 and then increases during the first two postnatal weeks before decreasing through adulthood.

It is found in the cytoplasm. The protein resides in the early endosome. The protein localises to the golgi apparatus. Its subcellular location is the trans-Golgi network. It localises to the cell projection. It is found in the dendrite. The enzyme catalyses S-ubiquitinyl-[E2 ubiquitin-conjugating enzyme]-L-cysteine + [acceptor protein]-L-lysine = [E2 ubiquitin-conjugating enzyme]-L-cysteine + N(6)-ubiquitinyl-[acceptor protein]-L-lysine.. In terms of biological role, E3 ubiquitin ligase that plays essential roles in neuronal functions such as regulation of neuronal plasticity, learning, and memory. In addition to its neuronal functions, participates in other biological processes such as innate immunity or cell cycle regulation. Component of the cytoskeleton-associated recycling or transport complex in neurons, polyubiquitinates gamma-actin, thus regulating neuronal plasticity, learning, and memory. Ubiquitinates postsynaptic scaffold GKAP, a neuronal substrate involved in synaptic remodeling and thereby modulates dendritic spine morphology. Positively regulates motility of microtubule-dependent motor protein KIF21B. Induces growth arrest via its RING-dependent E3 ligase activity and ubiquinates CDKN1A. Positively regulates TLR3-mediated signaling by mediating 'Lys-63'-linked polyubiquitination of TLR3. In turn, promotes the recognition and sorting of polyubiquitinated TLR3 by the ESCRT complexes. This Rattus norvegicus (Rat) protein is Tripartite motif-containing protein 3 (Trim3).